A 262-amino-acid polypeptide reads, in one-letter code: UPF0758 protein BTH_I0781 (262 aa).

Residues 1-45 (MQYEIVSAGENVGDEPERERPVAQAAAAPGIPRPAALPAAGAARR) form a disordered region. Over residues 22 to 43 (VAQAAAAPGIPRPAALPAAGAA) the composition is skewed to low complexity. An MPN domain is found at 140-262 (LVDSPGAVDD…TFSFAQAGWI (123 aa)). Zn(2+)-binding residues include His211, His213, and Asp224. The JAMM motif motif lies at 211–224 (HNHPSGAVRPSAAD).

The protein belongs to the UPF0758 family.

The polypeptide is UPF0758 protein BTH_I0781 (Burkholderia thailandensis (strain ATCC 700388 / DSM 13276 / CCUG 48851 / CIP 106301 / E264)).